Consider the following 271-residue polypeptide: Formamidopyrimidine-DNA glycosylase (271 aa).

The Schiff-base intermediate with DNA role is filled by proline 2. Glutamate 3 serves as the catalytic Proton donor. Residue lysine 57 is the Proton donor; for beta-elimination activity of the active site. DNA-binding residues include histidine 90, arginine 109, and lysine 151. Residues 236 to 270 (HVYGRGGETCTECGHLLSEIRLGQRTTVFCSLCQT) form an FPG-type zinc finger. Catalysis depends on arginine 260, which acts as the Proton donor; for delta-elimination activity.

This sequence belongs to the FPG family. Monomer. It depends on Zn(2+) as a cofactor.

It catalyses the reaction Hydrolysis of DNA containing ring-opened 7-methylguanine residues, releasing 2,6-diamino-4-hydroxy-5-(N-methyl)formamidopyrimidine.. It carries out the reaction 2'-deoxyribonucleotide-(2'-deoxyribose 5'-phosphate)-2'-deoxyribonucleotide-DNA = a 3'-end 2'-deoxyribonucleotide-(2,3-dehydro-2,3-deoxyribose 5'-phosphate)-DNA + a 5'-end 5'-phospho-2'-deoxyribonucleoside-DNA + H(+). Involved in base excision repair of DNA damaged by oxidation or by mutagenic agents. Acts as a DNA glycosylase that recognizes and removes damaged bases. Has a preference for oxidized purines, such as 7,8-dihydro-8-oxoguanine (8-oxoG). Has AP (apurinic/apyrimidinic) lyase activity and introduces nicks in the DNA strand. Cleaves the DNA backbone by beta-delta elimination to generate a single-strand break at the site of the removed base with both 3'- and 5'-phosphates. The sequence is that of Formamidopyrimidine-DNA glycosylase from Shewanella amazonensis (strain ATCC BAA-1098 / SB2B).